The sequence spans 52 residues: Large ribosomal subunit protein bL32c (52 aa).

The protein belongs to the bacterial ribosomal protein bL32 family.

It is found in the plastid. The protein localises to the chloroplast. In Capsella bursa-pastoris (Shepherd's purse), this protein is Large ribosomal subunit protein bL32c.